We begin with the raw amino-acid sequence, 964 residues long: Reticulon-3 (964 aa).

Residues 1-24 (MAESSAATQSPSVSSSSSGAEPSA) show a composition bias toward low complexity. Disordered stretches follow at residues 1 to 32 (MAES…GGSP), 68 to 109 (AGLS…SETL), and 179 to 200 (WVVK…DRSA). The residue at position 2 (A2) is an N-acetylalanine. Residues 2–795 (AESSAATQSP…KKTGFVFGTT (794 aa)) lie on the Cytoplasmic side of the membrane. S31 is subject to Phosphoserine. Residues 80–91 (SKSMTSSFLSSS) are compositionally biased toward low complexity. S217, S225, S230, S233, S270, S303, and S429 each carry phosphoserine. A disordered region spans residues 479–536 (ITEKPDSLPSAAAKTSEREIKETPSRETVRSEMCENSEQPQAQPETPTQKSLEGEVAS). The span at 493-511 (TSEREIKETPSRETVRSEM) shows a compositional bias: basic and acidic residues. A compositionally biased stretch (low complexity) spans 516–527 (EQPQAQPETPTQ). S529 carries the post-translational modification Phosphoserine. A Phosphothreonine modification is found at T593. Residues S596, S597, and S673 each carry the phosphoserine modification. Disordered stretches follow at residues 645–674 (ELSG…TMSP) and 697–723 (VQDE…SSSD). Residues 712-723 (FAPQSGPQSSSD) show a composition bias toward polar residues. The region spanning 776-964 (VHDLIFWRDV…LPGIAKKKAE (189 aa)) is the Reticulon domain. The segment at residues 796 to 819 (LIMLLSLAAFSVISVVSYLILALL) is an intramembrane region (helical). The Cytoplasmic portion of the chain corresponds to 820-876 (SVTISFRVYKSVIQAVQKSEEGHPFKAYLDVDITLSSEAFHNYMNAAMVHVNKALKL). Positions 877–899 (IIRLFLVEDLVDSLKLAVFMWLM) form an intramembrane region, helical. The Cytoplasmic segment spans residues 900–903 (TYVG). Residues 904–926 (AVFNGITLLILAELLVFSVPIVY) constitute an intramembrane region (helical). Residues 919 to 964 (VFSVPIVYEKYKTQIDHYVGIARDQTKSIVEKIQAKLPGIAKKKAE) are interaction with FADD. Residues 927–964 (EKYKTQIDHYVGIARDQTKSIVEKIQAKLPGIAKKKAE) are Cytoplasmic-facing. Residues 932–934 (QID) are interaction with BACE1.

In terms of assembly, homodimer. Interacts with RTN4. Isoform 3 interacts with BACE1, BACE2, BCL2 and FADD. Interacts with ATL1 and ATL2. Isoform 3 interacts with TMEM33. Interacts with ZFYVE27 and with KIF5A in a ZFYVE27-dependent manner. Interacts with RIGI. Interacts with TRIM25. In terms of tissue distribution, isoform 1, isoform 3, isoform 4 and isoform 5 are expressed in spinal cord. Isoform 1 is present in brain, where it is expressed in the neurons of cerebral cortex, hippocampus, hypothalamus and cerebellum (at protein level).

Its subcellular location is the endoplasmic reticulum membrane. It is found in the golgi apparatus membrane. Functionally, may be involved in membrane trafficking in the early secretory pathway. Inhibits BACE1 activity and amyloid precursor protein processing. May induce caspase-8 cascade and apoptosis. May favor BCL2 translocation to the mitochondria upon endoplasmic reticulum stress. Induces the formation of endoplasmic reticulum tubules. Also acts as an inflammation-resolving regulator by interacting with both TRIM25 and RIGI, subsequently impairing RIGI 'Lys-63'-linked polyubiquitination leading to IRF3 and NF-kappa-B inhibition. The protein is Reticulon-3 (Rtn3) of Mus musculus (Mouse).